We begin with the raw amino-acid sequence, 121 residues long: MNPKRCAACKYLRRRCPKDCVFSPYFPPNDPQKFACVHRIYGAGNVSKMLQQLPDQTRAEAVESLCFEAKCRVDDPVYGCVGIIHLLKTQIQKTQNELAKTQAEIAVAQTKLSQTHISDFM.

Positions 4–105 (KRCAACKYLR…NELAKTQAEI (102 aa)) constitute an LOB domain.

It belongs to the LOB domain-containing protein family.

The polypeptide is LOB domain-containing protein 23 (LBD23) (Arabidopsis thaliana (Mouse-ear cress)).